Here is a 130-residue protein sequence, read N- to C-terminus: MTETRTYATGKRKTAVARVFLSPGTGNIKVNQRPADDYFVRETSRMVMRQSLELLELLDQFDVSATVVGGGHSAQAEAMRHGIARALCELDPERRPSLKRAGFLTRDARKKERKKYGQPGARKRFQYSKR.

The disordered stretch occupies residues 98 to 130; sequence LKRAGFLTRDARKKERKKYGQPGARKRFQYSKR. Over residues 111 to 130 the composition is skewed to basic residues; the sequence is KERKKYGQPGARKRFQYSKR.

The protein belongs to the universal ribosomal protein uS9 family.

This Sorangium cellulosum (strain So ce56) (Polyangium cellulosum (strain So ce56)) protein is Small ribosomal subunit protein uS9.